A 283-amino-acid polypeptide reads, in one-letter code: 4-diphosphocytidyl-2-C-methyl-D-erythritol kinase (283 aa).

Residue Lys-10 is part of the active site. 95-105 (PVAAGLGGGSS) contributes to the ATP binding site. Asp-137 is an active-site residue.

Belongs to the GHMP kinase family. IspE subfamily.

The catalysed reaction is 4-CDP-2-C-methyl-D-erythritol + ATP = 4-CDP-2-C-methyl-D-erythritol 2-phosphate + ADP + H(+). It participates in isoprenoid biosynthesis; isopentenyl diphosphate biosynthesis via DXP pathway; isopentenyl diphosphate from 1-deoxy-D-xylulose 5-phosphate: step 3/6. Its function is as follows. Catalyzes the phosphorylation of the position 2 hydroxy group of 4-diphosphocytidyl-2C-methyl-D-erythritol. The sequence is that of 4-diphosphocytidyl-2-C-methyl-D-erythritol kinase from Pediococcus pentosaceus (strain ATCC 25745 / CCUG 21536 / LMG 10740 / 183-1w).